Reading from the N-terminus, the 297-residue chain is UDP-N-acetylenolpyruvoylglucosamine reductase (297 aa).

The FAD-binding PCMH-type domain maps to 18–184; that stretch reads QVGGPAEWYL…LSARLRLAPG (167 aa). The active site involves arginine 163. Catalysis depends on serine 214, which acts as the Proton donor. Glutamate 285 is a catalytic residue.

The cofactor is FAD.

The protein localises to the cytoplasm. It catalyses the reaction UDP-N-acetyl-alpha-D-muramate + NADP(+) = UDP-N-acetyl-3-O-(1-carboxyvinyl)-alpha-D-glucosamine + NADPH + H(+). It participates in cell wall biogenesis; peptidoglycan biosynthesis. Cell wall formation. This Gloeobacter violaceus (strain ATCC 29082 / PCC 7421) protein is UDP-N-acetylenolpyruvoylglucosamine reductase.